A 260-amino-acid polypeptide reads, in one-letter code: DNA-directed RNA polymerase subunit Rpo3 (260 aa).

It belongs to the archaeal Rpo3/eukaryotic RPB3 RNA polymerase subunit family. In terms of assembly, part of the RNA polymerase complex.

The protein resides in the cytoplasm. The catalysed reaction is RNA(n) + a ribonucleoside 5'-triphosphate = RNA(n+1) + diphosphate. DNA-dependent RNA polymerase (RNAP) catalyzes the transcription of DNA into RNA using the four ribonucleoside triphosphates as substrates. This is DNA-directed RNA polymerase subunit Rpo3 from Pyrobaculum aerophilum (strain ATCC 51768 / DSM 7523 / JCM 9630 / CIP 104966 / NBRC 100827 / IM2).